The primary structure comprises 385 residues: Chorismate synthase (385 aa).

The tract at residues 43–63 (PDLDRRRPGTSRHVTQRNEPD) is disordered. Residues Arg-48 and Arg-54 each contribute to the NADP(+) site. FMN-binding positions include 125-127 (RSS), 238-239 (NA), Gly-278, 293-297 (KPTSS), and Arg-319. A compositionally biased stretch (low complexity) spans 363-372 (AQAPRTETAP). Residues 363-385 (AQAPRTETAPATPPLDAGDDIEA) are disordered.

Belongs to the chorismate synthase family. Homotetramer. FMNH2 is required as a cofactor.

It carries out the reaction 5-O-(1-carboxyvinyl)-3-phosphoshikimate = chorismate + phosphate. It participates in metabolic intermediate biosynthesis; chorismate biosynthesis; chorismate from D-erythrose 4-phosphate and phosphoenolpyruvate: step 7/7. Functionally, catalyzes the anti-1,4-elimination of the C-3 phosphate and the C-6 proR hydrogen from 5-enolpyruvylshikimate-3-phosphate (EPSP) to yield chorismate, which is the branch point compound that serves as the starting substrate for the three terminal pathways of aromatic amino acid biosynthesis. This reaction introduces a second double bond into the aromatic ring system. The polypeptide is Chorismate synthase (Leptothrix cholodnii (strain ATCC 51168 / LMG 8142 / SP-6) (Leptothrix discophora (strain SP-6))).